The chain runs to 545 residues: Chaperonin GroEL 2 (545 aa).

Residues 30 to 33, Lys51, 87 to 91, Gly415, and Asp496 contribute to the ATP site; these read TLGP and DGTTT.

It belongs to the chaperonin (HSP60) family. As to quaternary structure, forms a cylinder of 14 subunits composed of two heptameric rings stacked back-to-back. Interacts with the co-chaperonin GroES.

The protein localises to the cytoplasm. It carries out the reaction ATP + H2O + a folded polypeptide = ADP + phosphate + an unfolded polypeptide.. Together with its co-chaperonin GroES, plays an essential role in assisting protein folding. The GroEL-GroES system forms a nano-cage that allows encapsulation of the non-native substrate proteins and provides a physical environment optimized to promote and accelerate protein folding. In Nitrobacter winogradskyi (strain ATCC 25391 / DSM 10237 / CIP 104748 / NCIMB 11846 / Nb-255), this protein is Chaperonin GroEL 2.